The primary structure comprises 182 residues: Coiled-coil domain-containing protein 32 (182 aa).

Over residues 1–10 the composition is skewed to basic and acidic residues; it reads MMIDDFETHA. 2 disordered regions span residues 1–61 and 153–182; these read MMID…FSPW and PTQNSETPASSSQTDKPCVEEEEECPSPEK. Polar residues predominate over residues 153–167; that stretch reads PTQNSETPASSSQTD. Over residues 172–182 the composition is skewed to acidic residues; sequence EEEEECPSPEK.

As to quaternary structure, associates with adaptor protein complex 2 (AP-2).

The protein resides in the membrane. The protein localises to the coated pit. Functionally, regulates clathrin-mediated endocytsois of cargos such as transferrin probably through the association and modulation of adaptor protein complex 2 (AP-2). Has a role in ciliogenesis and is required for proper cephalic and left/right axis development. This chain is Coiled-coil domain-containing protein 32, found in Danio rerio (Zebrafish).